We begin with the raw amino-acid sequence, 214 residues long: Dimethylamine corrinoid protein 2 (214 aa).

The B12-binding N-terminal domain occupies 1-91 (MATKEELIQE…DMPAGAATKK (91 aa)). Residues 92–214 (LGVIVNGTVE…AVAKAKELLL (123 aa)) form the B12-binding domain. His105 is a binding site for methylcob(III)alamin.

The protein belongs to the methylamine corrinoid protein family.

It participates in one-carbon metabolism; methanogenesis from dimethylamine. Its function is as follows. Acts as a methyl group carrier between MtbB and MtbA. The sequence is that of Dimethylamine corrinoid protein 2 (mtbC2) from Methanosarcina mazei (strain ATCC BAA-159 / DSM 3647 / Goe1 / Go1 / JCM 11833 / OCM 88) (Methanosarcina frisia).